We begin with the raw amino-acid sequence, 714 residues long: Palmitoyltransferase ZDHHC5 (714 aa).

The Cytoplasmic segment spans residues M1–K13. Residues Y14–F34 traverse the membrane as a helical segment. The Extracellular portion of the chain corresponds to T35–A52. A helical transmembrane segment spans residues V53–F73. Topologically, residues P74–Y148 are cytoplasmic. Phosphotyrosine is present on Y91. In terms of domain architecture, DHHC spans K104–L154. The active-site S-palmitoyl cysteine intermediate is the C134. A helical membrane pass occupies residues F149–L169. Residues Y170–C191 are Extracellular-facing. The chain crosses the membrane as a helical span at residues V192–A212. Over R213–V714 the chain is Cytoplasmic. S247 carries the phosphoserine modification. The disordered stretch occupies residues G289 to V714. Phosphothreonine is present on T294. S296 and S299 each carry phosphoserine. Phosphothreonine is present on T303. S345 carries the post-translational modification Phosphoserine. Residues T348 and T350 each carry the phosphothreonine modification. The segment covering S359–A373 has biased composition (low complexity). Residues S380, S398, S406, and S409 each carry the phosphoserine modification. A compositionally biased stretch (polar residues) spans A388–S398. Residue T411 is modified to Phosphothreonine. Over residues S422–S432 the composition is skewed to low complexity. S425, S429, and S432 each carry phosphoserine. T436 carries the post-translational modification Phosphothreonine. Positions S445 to D478 are enriched in polar residues. Phosphoserine is present on residues S529 and S554. Omega-N-methylarginine is present on R616. S620 is subject to Phosphoserine. T658 bears the Phosphothreonine mark. Positions T667–S678 are enriched in polar residues. Positions P683 to S692 are enriched in pro residues. S693 carries the phosphoserine modification. R696 bears the Omega-N-methylarginine mark.

This sequence belongs to the DHHC palmitoyltransferase family. ERF2/ZDHHC9 subfamily. In terms of processing, phosphorylation regulates association with endocytic proteins and its subcellular localization. Phosphorylation by LYN during fatty acid uptake leads to inactivation of the activity. Autopalmitoylated. Palmitoylation of the C-terminal tail regulates stimulation-dependent plasma membrane motility.

The protein localises to the cell membrane. It carries out the reaction L-cysteinyl-[protein] + hexadecanoyl-CoA = S-hexadecanoyl-L-cysteinyl-[protein] + CoA. Functionally, palmitoyltransferase that catalyzes the addition of palmitate onto various protein substrates such as CTNND2, CD36, GSDMD, NLRP3, NOD1, NOD2, STAT3 and S1PR1 thus plays a role in various biological processes including cell adhesion, inflammation, fatty acid uptake, bacterial sensing or cardiac functions. Plays an important role in the regulation of synapse efficacy by mediating palmitoylation of delta-catenin/CTNND2, thereby increasing synaptic delivery and surface stabilization of alpha-amino-3-hydroxy-5-methyl-4-isoxazole propionic acid receptors (AMPARs). Under basal conditions, remains at the synaptic membrane through FYN-mediated phosphorylation that prevents association with endocytic proteins. Neuronal activity enhances the internalization and trafficking of DHHC5 from spines to dendritic shafts where it palmitoylates delta-catenin/CTNND2. Regulates cell adhesion at the plasma membrane by palmitoylating GOLGA7B and DSG2. Plays a role in innate immune response by mediating the palmitoylation of NOD1 and NOD2 and their proper recruitment to the bacterial entry site and phagosomes. Also participates in fatty acid uptake by palmitoylating CD36 and thereby targeting it to the plasma membrane. Upon binding of fatty acids to CD36, gets phosphorylated by LYN leading to inactivation and subsequent CD36 caveolar endocytosis. Controls oligodendrocyte development by catalyzing STAT3 palmitoylation. Acts as a regulator of inflammatory response by mediating palmitoylation of NLRP3 and GSDMD. Palmitoylates NLRP3 to promote inflammasome assembly and activation. Activates pyroptosis by catalyzing palmitoylation of gasdermin-D (GSDMD), thereby promoting membrane translocation and pore formation of GSDMD. In Bos taurus (Bovine), this protein is Palmitoyltransferase ZDHHC5 (ZDHHC5).